Reading from the N-terminus, the 878-residue chain is Indoleacetate decarboxylase (878 aa).

Residues 42 to 750 (DRTKRMKERF…VTGATPDGRL (709 aa)) form the PFL domain. The active-site Cysteine radical intermediate is Cys-500. The Proton acceptor role is filled by Glu-502. Residues 758 to 878 (GILSASPGTD…VIARTEYDAL (121 aa)) enclose the Glycine radical domain. Glycine radical is present on Gly-853.

It belongs to the glycyl radical enzyme (GRE) family. Homodimer (predominantly) and monomer. Requires the activating protein OsIADAE to generate the key active site glycyl radical on Gly-853 that is involved in catalysis.

The enzyme catalyses (indol-3-yl)acetate + H(+) = skatole + CO2. It participates in amino-acid degradation. In terms of biological role, glycyl radical enzyme that catalyzes the terminal step of tryptophan fermentation, the decarboxylation of indoleacetate to form skatole, a malodorous compound that contributes to the characteristic smell of animal feces. No activity is detected with phenylacetate or p-hydroxyphenylacetate as substrates, indicating high substrate specificity. This chain is Indoleacetate decarboxylase, found in Tractidigestivibacter scatoligenes (Olsenella scatoligenes).